A 306-amino-acid chain; its full sequence is Pantothenate synthetase (306 aa).

37 to 44 is a binding site for ATP; the sequence is MGALHEGH. Residue His-44 is the Proton donor of the active site. Gln-69 is a binding site for (R)-pantoate. Beta-alanine is bound at residue Gln-69. 155–158 contributes to the ATP binding site; it reads GEKD. Residue Gln-161 coordinates (R)-pantoate. Residues Val-184 and 192–195 contribute to the ATP site; that span reads KSSR.

This sequence belongs to the pantothenate synthetase family. Homodimer.

Its subcellular location is the cytoplasm. It carries out the reaction (R)-pantoate + beta-alanine + ATP = (R)-pantothenate + AMP + diphosphate + H(+). It participates in cofactor biosynthesis; (R)-pantothenate biosynthesis; (R)-pantothenate from (R)-pantoate and beta-alanine: step 1/1. Catalyzes the condensation of pantoate with beta-alanine in an ATP-dependent reaction via a pantoyl-adenylate intermediate. The chain is Pantothenate synthetase from Corynebacterium jeikeium (strain K411).